Reading from the N-terminus, the 312-residue chain is MALRIGVLCGGRSAEREVSLRSGEAVYQALMAAGYNDVVKIDVGYDLVEQLKGNEIQVAFLALHGKYGEDGTIQGLLEMLDIPYTGSGVLASALAINKIATKKIFKMEGIPTPAFSVITKKEVEDKSLQEAALRAIKEVGVPAVVKANTQGSTIGITFVHVKEKMAEAIESALKYDQDVLVEQFVAGTEVTASVLGNNSPEALPLIEITSVTGVYDYQSKYTPGMSDHIIPPRLPQDIQEKIKELAIKSFLSLGCRGLGRIDFIIRDNQPYALEVNTLPGMTATSLFPDAANYAGISFPELTDRLIKLALEQ.

One can recognise an ATP-grasp domain in the interval 102 to 307; sequence KKIFKMEGIP…FPELTDRLIK (206 aa). 136 to 191 is an ATP binding site; the sequence is IKEVGVPAVVKANTQGSTIGITFVHVKEKMAEAIESALKYDQDVLVEQFVAGTEVT. Positions 262, 274, and 276 each coordinate Mg(2+).

This sequence belongs to the D-alanine--D-alanine ligase family. The cofactor is Mg(2+). Mn(2+) is required as a cofactor.

Its subcellular location is the cytoplasm. The catalysed reaction is 2 D-alanine + ATP = D-alanyl-D-alanine + ADP + phosphate + H(+). Its pathway is cell wall biogenesis; peptidoglycan biosynthesis. Cell wall formation. The chain is D-alanine--D-alanine ligase from Desulforamulus reducens (strain ATCC BAA-1160 / DSM 100696 / MI-1) (Desulfotomaculum reducens).